A 95-amino-acid polypeptide reads, in one-letter code: Small ribosomal subunit protein bS6 (95 aa).

It belongs to the bacterial ribosomal protein bS6 family.

Functionally, binds together with bS18 to 16S ribosomal RNA. In Corynebacterium glutamicum (strain ATCC 13032 / DSM 20300 / JCM 1318 / BCRC 11384 / CCUG 27702 / LMG 3730 / NBRC 12168 / NCIMB 10025 / NRRL B-2784 / 534), this protein is Small ribosomal subunit protein bS6.